The following is a 120-amino-acid chain: MFALSGYEYLLGFLLLCSLVPALALSASKVLRPSNQGAVRRTTYESGMEPVGGAWIQFNIRYYMFALVFVIFDVETVFLYPWAVAFHKLGVLAFIEALIFIAILIVGLVYAWRKGALEWS.

The next 3 helical transmembrane spans lie at 10–32 (LLGFLLLCSLVPALALSASKVLR), 64–84 (MFALVFVIFDVETVFLYPWAV), and 89–109 (LGVLAFIEALIFIAILIVGLV).

The protein belongs to the complex I subunit 3 family. NDH-1 can be composed of about 15 different subunits; different subcomplexes with different compositions have been identified which probably have different functions.

The protein resides in the cellular thylakoid membrane. The catalysed reaction is a plastoquinone + NADH + (n+1) H(+)(in) = a plastoquinol + NAD(+) + n H(+)(out). It catalyses the reaction a plastoquinone + NADPH + (n+1) H(+)(in) = a plastoquinol + NADP(+) + n H(+)(out). NDH-1 shuttles electrons from an unknown electron donor, via FMN and iron-sulfur (Fe-S) centers, to quinones in the respiratory and/or the photosynthetic chain. The immediate electron acceptor for the enzyme in this species is believed to be plastoquinone. Couples the redox reaction to proton translocation, and thus conserves the redox energy in a proton gradient. Cyanobacterial NDH-1 also plays a role in inorganic carbon-concentration. The polypeptide is NAD(P)H-quinone oxidoreductase subunit 3 (Acaryochloris marina (strain MBIC 11017)).